We begin with the raw amino-acid sequence, 299 residues long: Putative syntaxin-2 (299 aa).

Topologically, residues 1–270 (MRDRLNEFQS…SAMRKKICVA (270 aa)) are cytoplasmic. Positions 112-146 (EKRMRQNQLELLKDNLNKLINLFNETHQDYKSRVS) form a coiled coil. Positions 193–255 (YEDVKKRHGE…KQGSANVKTA (63 aa)) constitute a t-SNARE coiled-coil homology domain. Residues 271-291 (AILITILLILIIVAIILAVVL) form a helical; Anchor for type IV membrane protein membrane-spanning segment. Residues 292-299 (SRGNNNNK) are Extracellular-facing.

Belongs to the syntaxin family.

It localises to the membrane. Functionally, potentially involved in docking of synaptic vesicles at presynaptic active zones. The sequence is that of Putative syntaxin-2 (syx-2) from Caenorhabditis elegans.